A 1206-amino-acid chain; its full sequence is uncharacterized protein (1206 aa).

Disordered regions lie at residues 133 to 547, 568 to 837, and 859 to 1206; these read YDLD…PVDY, FASS…DQLL, and RQRA…KATS. 2 stretches are compositionally biased toward pro residues: residues 139–151 and 159–234; these read IPPP…PGPP and GESP…PPAP. Serine 255 carries the post-translational modification Phosphoserine. Positions 305–319 are enriched in low complexity; sequence VRTSSIPVQEAPGAS. A compositionally biased stretch (basic and acidic residues) spans 351–363; sequence RALEPEQPREPRP. Positions 384–413 are enriched in pro residues; that stretch reads APPPAPPLPPPAPPLPPPAPSLPPAAPPLP. Residues 414–436 show a composition bias toward low complexity; it reads STELAAPPSSGFMKTSKSNSPAL. The segment covering 454 to 467 has biased composition (basic and acidic residues); sequence VDWRDPRQMEKLRS. The span at 522-531 shows a compositional bias: low complexity; sequence PEKSPSSSSL. Positions 568 to 577 are enriched in basic and acidic residues; the sequence is FASSAEKEAK. The span at 656 to 671 shows a compositional bias: low complexity; that stretch reads LPKATPGLTLPLKPTP. The residue at position 680 (threonine 680) is a Phosphothreonine. The span at 732–747 shows a compositional bias: basic and acidic residues; the sequence is AEKDLASVRQREKPET. The segment covering 1001-1016 has biased composition (pro residues); sequence IPPPPEFSNDPEPPAP. Residues 1028-1041 show a composition bias toward polar residues; sequence PRNNFSDLGQSWGP. Arginine 1051, arginine 1083, and arginine 1094 each carry omega-N-methylarginine. The segment covering 1170–1184 has biased composition (polar residues); the sequence is PHGNTHYGSPINTFT.

This is an uncharacterized protein from Mus musculus (Mouse).